The following is a 600-amino-acid chain: Cytidine monophosphate-N-acetylneuraminic acid hydroxylase (600 aa).

In terms of domain architecture, Rieske spans 9–107; the sequence is LSPVEVASLK…VEMDENNRLL (99 aa). [2Fe-2S] cluster is bound by residues Cys-49, His-51, Cys-70, and His-73.

The protein belongs to the CMP-Neu5Ac hydroxylase family. [2Fe-2S] cluster is required as a cofactor.

The protein localises to the cytoplasm. The enzyme catalyses CMP-N-acetyl-beta-neuraminate + 2 Fe(II)-[cytochrome b5] + O2 + 2 H(+) = CMP-N-glycoloyl-beta-neuraminate + 2 Fe(III)-[cytochrome b5] + H2O. The protein operates within amino-sugar metabolism; N-acetylneuraminate metabolism. Sialic acids are components of carbohydrate chains of glycoconjugates and are involved in cell-cell recognition and cell-pathogen interactions. Catalyzes the conversion of CMP-N-acetylneuraminic acid (CMP-Neu5Ac) into its hydroxylated derivative CMP-N-glycolylneuraminic acid (CMP-Neu5Gc), a sialic acid abundantly expressed at the surface of many cells. This is Cytidine monophosphate-N-acetylneuraminic acid hydroxylase (CMAH) from Pan paniscus (Pygmy chimpanzee).